A 162-amino-acid chain; its full sequence is Lipoprotein signal peptidase (162 aa).

The next 3 helical transmembrane spans lie at 12 to 32 (WLWL…LILQ), 70 to 90 (WFFA…MYRS), and 102 to 122 (ALII…GFVV). Active-site residues include D123 and D141. A helical membrane pass occupies residues 137 to 157 (FNLADSAICIGAALIVLEGFL).

Belongs to the peptidase A8 family.

The protein localises to the cell inner membrane. The catalysed reaction is Release of signal peptides from bacterial membrane prolipoproteins. Hydrolyzes -Xaa-Yaa-Zaa-|-(S,diacylglyceryl)Cys-, in which Xaa is hydrophobic (preferably Leu), and Yaa (Ala or Ser) and Zaa (Gly or Ala) have small, neutral side chains.. The protein operates within protein modification; lipoprotein biosynthesis (signal peptide cleavage). Functionally, this protein specifically catalyzes the removal of signal peptides from prolipoproteins. This chain is Lipoprotein signal peptidase, found in Citrobacter koseri (strain ATCC BAA-895 / CDC 4225-83 / SGSC4696).